A 555-amino-acid chain; its full sequence is GPI-anchor transamidase component PIGS (555 aa).

The Cytoplasmic segment spans residues 2 to 18; it reads AAAGAAATHLEVARGKR. Residues Arg15 and Arg18 each contribute to the a cardiolipin site. Residues 19-39 traverse the membrane as a helical segment; the sequence is AALFFAAVAIVLGLPLWWKTT. The Lumenal segment spans residues 40-517; sequence ETYRASLPYS…LHLLYFPDDQ (478 aa). N-linked (GlcNAc...) asparagine glycans are attached at residues Asn267 and Asn370. A helical membrane pass occupies residues 518–532; that stretch reads KFAIYIPLFLPMAVP. At 533–555 the chain is on the cytoplasmic side; the sequence is ILLSLVKIFLETRKSWRKPEKTD.

Belongs to the PIGS family. Heteropentamer. Part of the GPI-anchor transamidase complex, consisting of PIGK, PIGT, PIGS, PIGU and GAA1.

Its subcellular location is the endoplasmic reticulum membrane. The protein operates within glycolipid biosynthesis; glycosylphosphatidylinositol-anchor biosynthesis. Functionally, component of the glycosylphosphatidylinositol-anchor (GPI-anchor) transamidase (GPI-T) complex that catalyzes the formation of the linkage between a proprotein and a GPI-anchor and participates in GPI anchored protein biosynthesis. This is GPI-anchor transamidase component PIGS from Homo sapiens (Human).